We begin with the raw amino-acid sequence, 248 residues long: 3-deoxy-manno-octulosonate cytidylyltransferase 2 (248 aa).

This sequence belongs to the KdsB family.

It is found in the cytoplasm. It carries out the reaction 3-deoxy-alpha-D-manno-oct-2-ulosonate + CTP = CMP-3-deoxy-beta-D-manno-octulosonate + diphosphate. It functions in the pathway nucleotide-sugar biosynthesis; CMP-3-deoxy-D-manno-octulosonate biosynthesis; CMP-3-deoxy-D-manno-octulosonate from 3-deoxy-D-manno-octulosonate and CTP: step 1/1. The protein operates within bacterial outer membrane biogenesis; lipopolysaccharide biosynthesis. Activates KDO (a required 8-carbon sugar) for incorporation into bacterial lipopolysaccharide in Gram-negative bacteria. In Hydrogenovibrio crunogenus (strain DSM 25203 / XCL-2) (Thiomicrospira crunogena), this protein is 3-deoxy-manno-octulosonate cytidylyltransferase 2.